A 216-amino-acid chain; its full sequence is Dephospho-CoA kinase (216 aa).

A DPCK domain is found at 18 to 216; the sequence is IIGVIGPPCS…SELASVLQSK (199 aa). Position 26–31 (26–31) interacts with ATP; that stretch reads CSGKST.

The protein belongs to the CoaE family.

The protein resides in the cytoplasm. It carries out the reaction 3'-dephospho-CoA + ATP = ADP + CoA + H(+). Its pathway is cofactor biosynthesis; coenzyme A biosynthesis; CoA from (R)-pantothenate: step 5/5. Catalyzes the phosphorylation of the 3'-hydroxyl group of dephosphocoenzyme A to form coenzyme A. This is Dephospho-CoA kinase from Rhodopirellula baltica (strain DSM 10527 / NCIMB 13988 / SH1).